The following is a 205-amino-acid chain: Transcriptional regulator GfcR (205 aa).

The protein belongs to the purine/pyrimidine phosphoribosyltransferase family. GfcR subfamily.

The protein is Transcriptional regulator GfcR of Methanococcus maripaludis (strain DSM 14266 / JCM 13030 / NBRC 101832 / S2 / LL).